The primary structure comprises 294 residues: Oligopeptide transport system permease protein OppC (294 aa).

Helical transmembrane passes span 27–47 (MISTIFLVAVFLIVYIYSMFL), 94–114 (IAFAVTLITLVVGNILGVITG), 127–147 (FTDFVMILPSMMIIIVFVTII), 151–171 (NSWSLIGIISIFSWIGTTRLI), 202–224 (IWPNLSTLVIAEATLVFAGNIGL), and 260–280 (WTWVPATVVILIVVLAIIFIG). In terms of domain architecture, ABC transmembrane type-1 spans 88-280 (ARNSFNIAFA…IVVLAIIFIG (193 aa)).

Belongs to the binding-protein-dependent transport system permease family. OppBC subfamily. The complex is composed of two ATP-binding proteins (OppD and OppF), two transmembrane proteins (OppB and OppC) and a solute-binding protein (OppA).

The protein localises to the cell membrane. In terms of biological role, part of the ABC transporter complex OppABCDF involved in the uptake of oligopeptides. Probably responsible for the translocation of the substrate across the membrane. The polypeptide is Oligopeptide transport system permease protein OppC (Lactococcus lactis subsp. cremoris (strain SK11)).